Consider the following 165-residue polypeptide: uncharacterized protein (165 aa).

This is an uncharacterized protein from Escherichia coli (strain K12).